A 189-amino-acid polypeptide reads, in one-letter code: Leucine repeat adapter protein 25 (189 aa).

Serine 28 carries the post-translational modification Phosphoserine. A disordered region spans residues 54–83 (ELSRAARAPDGPRHAAGAANAGPAAGPRRP). Positions 67–83 (HAAGAANAGPAAGPRRP) are enriched in low complexity. One copy of the LRR repeat lies at 86 to 114 (LDSALAALRKEMVGLRQLDMSLLCQLWGL). Residues 141 to 175 (DSSYPPDAGLSDDEEPPDASLPPDPPPLTVPQTHN) form a disordered region. A compositionally biased stretch (pro residues) spans 159 to 169 (ASLPPDPPPLT). A Phosphoserine modification is found at serine 188.

The protein belongs to the FAM89 family. In terms of assembly, interacts with SKI. Interacts (via LRR repeat) with CDC42BPA (via AGC-kinase C-terminal domain), CDC42BPB (via AGC-kinase C-terminal domain) and LIMK1 (via LIM zinc-binding domains). Forms a tripartite complex with CDC42BPA, CDC42BPB and LIMK1.

It localises to the cytoplasm. Its subcellular location is the cell projection. The protein localises to the lamellipodium. Functionally, negatively regulates TGF-beta-induced signaling; in cooperation with SKI prevents the translocation of SMAD2 from the nucleus to the cytoplasm in response to TGF-beta. Acts as an adapter that mediates the specific recognition of LIMK1 by CDC42BPA and CDC42BPB in the lamellipodia. LRAP25-mediated CDC42BPA/CDC42BPB targeting to LIMK1 and the lamellipodium results in LIMK1 activation and the subsequent phosphorylation of CFL1 which is important for lamellipodial F-actin regulation. The protein is Leucine repeat adapter protein 25 (FAM89B) of Homo sapiens (Human).